The following is a 373-amino-acid chain: UDP-3-O-acylglucosamine N-acyltransferase 2 (373 aa).

The Proton acceptor role is filled by histidine 239. Residues lysine 345–glycine 373 are disordered.

This sequence belongs to the transferase hexapeptide repeat family. LpxD subfamily. As to quaternary structure, homotrimer.

It carries out the reaction a UDP-3-O-[(3R)-3-hydroxyacyl]-alpha-D-glucosamine + a (3R)-hydroxyacyl-[ACP] = a UDP-2-N,3-O-bis[(3R)-3-hydroxyacyl]-alpha-D-glucosamine + holo-[ACP] + H(+). It participates in bacterial outer membrane biogenesis; LPS lipid A biosynthesis. Its function is as follows. Catalyzes the N-acylation of UDP-3-O-acylglucosamine using 3-hydroxyacyl-ACP as the acyl donor. Is involved in the biosynthesis of lipid A, a phosphorylated glycolipid that anchors the lipopolysaccharide to the outer membrane of the cell. This chain is UDP-3-O-acylglucosamine N-acyltransferase 2, found in Gloeobacter violaceus (strain ATCC 29082 / PCC 7421).